The chain runs to 101 residues: Urease subunit beta (101 aa).

Belongs to the urease beta subunit family. Heterotrimer of UreA (gamma), UreB (beta) and UreC (alpha) subunits. Three heterotrimers associate to form the active enzyme.

The protein resides in the cytoplasm. It catalyses the reaction urea + 2 H2O + H(+) = hydrogencarbonate + 2 NH4(+). It functions in the pathway nitrogen metabolism; urea degradation; CO(2) and NH(3) from urea (urease route): step 1/1. The polypeptide is Urease subunit beta (Sinorhizobium medicae (strain WSM419) (Ensifer medicae)).